Consider the following 526-residue polypeptide: GMP synthase [glutamine-hydrolyzing] (526 aa).

The Glutamine amidotransferase type-1 domain occupies 3 to 199 (RVAIIDFGSQ…FVRIAGCDNN (197 aa)). Residue C83 is the Nucleophile of the active site. Residues H174 and E176 contribute to the active site. The GMPS ATP-PPase domain maps to 200-392 (WTVESFLDEQ…LGISDEILMR (193 aa)). 227–233 (SGGVDSS) provides a ligand contact to ATP.

As to quaternary structure, homodimer.

It catalyses the reaction XMP + L-glutamine + ATP + H2O = GMP + L-glutamate + AMP + diphosphate + 2 H(+). It functions in the pathway purine metabolism; GMP biosynthesis; GMP from XMP (L-Gln route): step 1/1. Catalyzes the synthesis of GMP from XMP. This Ehrlichia chaffeensis (strain ATCC CRL-10679 / Arkansas) protein is GMP synthase [glutamine-hydrolyzing].